Reading from the N-terminus, the 116-residue chain is Large ribosomal subunit protein uL18 (116 aa).

This sequence belongs to the universal ribosomal protein uL18 family. Part of the 50S ribosomal subunit; part of the 5S rRNA/L5/L18/L25 subcomplex. Contacts the 5S and 23S rRNAs.

Functionally, this is one of the proteins that bind and probably mediate the attachment of the 5S RNA into the large ribosomal subunit, where it forms part of the central protuberance. The chain is Large ribosomal subunit protein uL18 from Shewanella piezotolerans (strain WP3 / JCM 13877).